Consider the following 297-residue polypeptide: HTH-type transcriptional regulator ArgP (297 aa).

Residues 4-60 enclose the HTH lysR-type domain; it reads PDYRTLQALDAVIRERGFERAAQKLCITQSAVSQRIKQLENMFGQPLLVRTVPPRPT. A DNA-binding region (H-T-H motif) is located at residues 21-40; it reads FERAAQKLCITQSAVSQRIK.

Belongs to the LysR transcriptional regulatory family. In terms of assembly, homodimer.

In terms of biological role, controls the transcription of genes involved in arginine and lysine metabolism. The protein is HTH-type transcriptional regulator ArgP of Escherichia coli O7:K1 (strain IAI39 / ExPEC).